A 523-amino-acid chain; its full sequence is Carboxypeptidase Y (523 aa).

An N-terminal signal peptide occupies residues 1 to 20; the sequence is MILHTYIILSLLTIFPKAIG. Positions 21–107 are excised as a propeptide; that stretch reads LSLQMPMALE…QELPNYRLRV (87 aa). 5 disulfide bridges follow: cysteine 162-cysteine 401, cysteine 296-cysteine 310, cysteine 320-cysteine 343, cysteine 327-cysteine 336, and cysteine 365-cysteine 371. A glycan (N-linked (GlcNAc...) asparagine) is linked at asparagine 193. Serine 249 is an active-site residue. The N-linked (GlcNAc...) asparagine glycan is linked to asparagine 271. Aspartate 441 is a catalytic residue. Asparagine 484 and asparagine 487 each carry an N-linked (GlcNAc...) asparagine glycan. Histidine 498 is a catalytic residue.

It belongs to the peptidase S10 family.

The protein localises to the vacuole. The enzyme catalyses Release of a C-terminal amino acid with broad specificity.. Functionally, involved in degradation of small peptides. This Komagataella phaffii (strain GS115 / ATCC 20864) (Yeast) protein is Carboxypeptidase Y (PRC1).